Reading from the N-terminus, the 612-residue chain is Protein hinderin (612 aa).

Ser-20 bears the Phosphoserine mark. Positions Leu-90–Lys-166 form a coiled coil. A Phosphoserine modification is found at Ser-178. Residues Ile-362 to Leu-406 are a coiled coil. Residues Ser-462–Asn-477 show a composition bias toward polar residues. Disordered regions lie at residues Ser-462–Val-484 and Glu-509–Glu-598. Phosphoserine occurs at positions 471, 527, and 558. Polar residues-rich tracts occupy residues Gln-555–His-568 and Thr-575–Lys-585.

In terms of assembly, interacts (via N- and C-terminal domains) with SMC3 (via central hinge region).

Competes with SMC1 for binding to SMC3. May affect the availability of SMC3 to engage in the formation of multimeric protein complexes. The chain is Protein hinderin (Kiaa1328) from Mus musculus (Mouse).